Consider the following 450-residue polypeptide: Phosphoglucosamine mutase (450 aa).

The Phosphoserine intermediate role is filled by S102. 4 residues coordinate Mg(2+): S102, D244, D246, and D248. S102 bears the Phosphoserine mark.

The protein belongs to the phosphohexose mutase family. The cofactor is Mg(2+). Activated by phosphorylation.

The catalysed reaction is alpha-D-glucosamine 1-phosphate = D-glucosamine 6-phosphate. Functionally, catalyzes the conversion of glucosamine-6-phosphate to glucosamine-1-phosphate. The chain is Phosphoglucosamine mutase from Nitratidesulfovibrio vulgaris (strain DSM 19637 / Miyazaki F) (Desulfovibrio vulgaris).